Consider the following 483-residue polypeptide: ATP synthase subunit beta (483 aa).

Residue Gly-169–Thr-176 coordinates ATP.

This sequence belongs to the ATPase alpha/beta chains family. In terms of assembly, F-type ATPases have 2 components, CF(1) - the catalytic core - and CF(0) - the membrane proton channel. CF(1) has five subunits: alpha(3), beta(3), gamma(1), delta(1), epsilon(1). CF(0) has three main subunits: a(1), b(2) and c(9-12). The alpha and beta chains form an alternating ring which encloses part of the gamma chain. CF(1) is attached to CF(0) by a central stalk formed by the gamma and epsilon chains, while a peripheral stalk is formed by the delta and b chains.

The protein resides in the cell membrane. It carries out the reaction ATP + H2O + 4 H(+)(in) = ADP + phosphate + 5 H(+)(out). Produces ATP from ADP in the presence of a proton gradient across the membrane. The catalytic sites are hosted primarily by the beta subunits. This Rhodococcus jostii (strain RHA1) protein is ATP synthase subunit beta.